The chain runs to 191 residues: Ion-translocating oxidoreductase complex subunit B (191 aa).

Residues 1-26 are hydrophobic; the sequence is MSAVLIAVLALLALCLLGGAILGFAA. The 4Fe-4S domain occupies 32 to 90; that stretch reads EGDPIAEQINALLPQTQCGQCGYPGCKPYAEAIAGGDKINKCPPGGEATIQALADLLDV. [4Fe-4S] cluster-binding residues include cysteine 49, cysteine 52, cysteine 57, cysteine 73, cysteine 114, cysteine 117, cysteine 120, cysteine 124, cysteine 144, cysteine 147, cysteine 150, and cysteine 154. 4Fe-4S ferredoxin-type domains are found at residues 105 to 134 and 135 to 164; these read MVAY…GAAR and QMHT…MIEV.

The protein belongs to the 4Fe4S bacterial-type ferredoxin family. RnfB subfamily. In terms of assembly, the complex is composed of six subunits: RnfA, RnfB, RnfC, RnfD, RnfE and RnfG. [4Fe-4S] cluster is required as a cofactor.

The protein resides in the cell inner membrane. Part of a membrane-bound complex that couples electron transfer with translocation of ions across the membrane. The sequence is that of Ion-translocating oxidoreductase complex subunit B from Stutzerimonas stutzeri (strain A1501) (Pseudomonas stutzeri).